We begin with the raw amino-acid sequence, 299 residues long: Recombination-associated protein RdgC (299 aa).

Belongs to the RdgC family.

The protein resides in the cytoplasm. Its subcellular location is the nucleoid. In terms of biological role, may be involved in recombination. The sequence is that of Recombination-associated protein RdgC from Laribacter hongkongensis (strain HLHK9).